The primary structure comprises 263 residues: Phosphate import ATP-binding protein PstB (263 aa).

One can recognise an ABC transporter domain in the interval 17-258; it reads IDVRDLNFYY…PRRKETEDYI (242 aa). 49–56 contacts ATP; the sequence is GPSGCGKS.

Belongs to the ABC transporter superfamily. Phosphate importer (TC 3.A.1.7) family. As to quaternary structure, the complex is composed of two ATP-binding proteins (PstB), two transmembrane proteins (PstC and PstA) and a solute-binding protein (PstS).

The protein localises to the cell inner membrane. The catalysed reaction is phosphate(out) + ATP + H2O = ADP + 2 phosphate(in) + H(+). Part of the ABC transporter complex PstSACB involved in phosphate import. Responsible for energy coupling to the transport system. This Ralstonia nicotianae (strain ATCC BAA-1114 / GMI1000) (Ralstonia solanacearum) protein is Phosphate import ATP-binding protein PstB.